An 895-amino-acid chain; its full sequence is Zinc finger protein 574 (895 aa).

3 consecutive C2H2-type zinc fingers follow at residues 16 to 38 (YVCS…QNSH), 76 to 98 (YQCL…QELH), and 126 to 148 (YECV…RQTH). The residue at position 164 (serine 164) is a Phosphoserine. The segment at 214–236 (YKCSECSQLFQLPADFLEHQATH) adopts a C2H2-type 4 zinc-finger fold. Residues 239–301 (APVPESQEPA…RARRNNSGEA (63 aa)) are disordered. The span at 247–257 (PALQQEVQASS) shows a compositional bias: polar residues. A compositionally biased stretch (basic and acidic residues) spans 274-287 (HSYELRNGEAIGRD). The residue at position 298 (serine 298) is a Phosphoserine. 4 C2H2-type zinc fingers span residues 309 to 331 (LFCS…LRSH), 336 to 358 (FKCP…LGDH), 364 to 386 (FLCV…RRAH), and 392 to 413 (HSCP…RRTH). The segment at 434 to 460 (FPEPAPAETGEPEAPEPPVSEETSAGP) is disordered. 6 consecutive C2H2-type zinc fingers follow at residues 466 to 489 (YRCL…RFVH), 495 to 517 (HKCS…LRTH), 523 to 545 (FPCP…RLTH), 551 to 573 (YRCG…RLVH), 579 to 601 (YRCQ…RYHH), and 607 to 630 (YKCR…LVVH). Residues 636–659 (HRCPSCGAAFPSSLRLREHRCAAA) form a C2H2-type 15; degenerate zinc finger. A C2H2-type 16 zinc finger spans residues 667-689 (FECGTCGKKVGSAARLQAHEAAH). Residues 687-732 (AAHAAAGPGEVLAKEPPAPRAPRATRAPVASPAALGGTATASPAPA) form a disordered region. The span at 707–731 (APRATRAPVASPAALGGTATASPAP) shows a compositional bias: low complexity. Phosphoserine is present on serine 717. Threonine 724 bears the Phosphothreonine mark. At serine 728 the chain carries Phosphoserine. C2H2-type zinc fingers lie at residues 737–759 (LECS…RRIH), 765–787 (YPCP…RRLH), 793–815 (FACE…RRIH), and 821–843 (YSCP…RKTH). The residue at position 831 (arginine 831) is an Asymmetric dimethylarginine.

It belongs to the krueppel C2H2-type zinc-finger protein family.

The protein resides in the nucleus. In terms of biological role, may be involved in transcriptional regulation. The sequence is that of Zinc finger protein 574 (ZNF574) from Pongo abelii (Sumatran orangutan).